A 189-amino-acid polypeptide reads, in one-letter code: UPF0398 protein lhv_1265 (189 aa).

This sequence belongs to the UPF0398 family.

This is UPF0398 protein lhv_1265 from Lactobacillus helveticus (strain DPC 4571).